The primary structure comprises 156 residues: MIHFLLCFNRQSKVRLSKFYSTYTPTEKNRATREVMNQVLSRSPKFCNFVQWREFTIVYQRFASLFFVMVTDSTDNELVTLESIQRFVVVLDIVFGNICELDLIYEFQRAYQVLDEFLLTGHLQESSSKEILRAINDAEGMEKSLLVAEVLDQHFL.

This sequence belongs to the adaptor complexes small subunit family. In terms of assembly, adaptor protein complex 1 (AP-1) is a heterotetramer composed of two large adaptins (gamma-type subunit and beta-type subunit), a medium adaptin (mu-type subunit) and a small adaptin (sigma-type subunit).

Its subcellular location is the golgi apparatus. It localises to the trans-Golgi network. The protein localises to the cytoplasmic vesicle. It is found in the clathrin-coated vesicle membrane. Subunit of clathrin-associated adaptor protein complex 1 that plays a role in protein sorting in the trans-Golgi network (TGN) and endosomes. The AP complexes mediate the recruitment of clathrin to membranes and the recognition of sorting signals within the cytosolic tails of transmembrane cargo molecules. Also involved in early steps of phagocytosis and macropinocytosis. In Dictyostelium discoideum (Social amoeba), this protein is AP-1 complex subunit sigma-1 (ap1s1).